We begin with the raw amino-acid sequence, 88 residues long: Small ribosomal subunit protein bS16 (88 aa).

Belongs to the bacterial ribosomal protein bS16 family.

In Baumannia cicadellinicola subsp. Homalodisca coagulata, this protein is Small ribosomal subunit protein bS16.